A 313-amino-acid polypeptide reads, in one-letter code: Zinc transporter ZitB (313 aa).

The Cytoplasmic portion of the chain corresponds to 1–20; the sequence is MAHSHSHTSSHLPEDNNARR. The chain crosses the membrane as a helical span at residues 21-41; sequence LLYAFGVTAGFMLVEVVGGFL. Over 42 to 47 the chain is Periplasmic; sequence SGSLAL. Residues 48–68 traverse the membrane as a helical segment; it reads LADAGHMLTDTAALLFALLAV. Topologically, residues 69–89 are cytoplasmic; sequence QFSRRPPTIRHTFGWLRLTTL. The chain crosses the membrane as a helical span at residues 90–110; it reads AAFVNAIALVVITILIVWEAI. Residues 111-121 are Periplasmic-facing; sequence ERFRTPRPVEG. The helical transmembrane segment at 122-142 threads the bilayer; that stretch reads GMMMAIAVAGLLANILSFWLL. The Cytoplasmic segment spans residues 143-159; sequence HHGSEEKNLNVRAAALH. A helical membrane pass occupies residues 160 to 180; it reads VLGDLLGSVGAIIAALIIIWT. A topological domain (periplasmic) is located at residue Gly-181. Residues 182-202 form a helical membrane-spanning segment; that stretch reads WTPADPILSILVSLLVLRSAW. The Cytoplasmic portion of the chain corresponds to 203–313; sequence RLLKDSVNEL…GVSGHSHHHH (111 aa).

This sequence belongs to the cation diffusion facilitator (CDF) transporter (TC 2.A.4) family. SLC30A subfamily.

It is found in the cell inner membrane. Its function is as follows. Involved in zinc efflux across the cytoplasmic membrane, thus reducing zinc accumulation in the cytoplasm and rendering bacteria more resistant to zinc. It may contribute to zinc homeostasis at low concentrations of zinc. This Shigella flexneri protein is Zinc transporter ZitB (zitB).